A 190-amino-acid chain; its full sequence is uncharacterized protein (190 aa).

Disordered regions lie at residues 1–21 (MALR…ATVG) and 155–190 (PEMG…TQAS). The span at 181 to 190 (SPSSHPTQAS) shows a compositional bias: low complexity.

This is an uncharacterized protein from Homo sapiens (Human).